We begin with the raw amino-acid sequence, 527 residues long: Cytokinin dehydrogenase 6 (527 aa).

The first 22 residues, 1 to 22 (MAARCSIAFMVMASCLSVVVSG), serve as a signal peptide directing secretion. The 182-residue stretch at 55–236 (VAAAPEAVLH…TRARIGLEPA (182 aa)) folds into the FAD-binding PCMH-type domain. The FAD site is built by Gly-91 and Gly-93. His-94 carries the post-translational modification Pros-8alpha-FAD histidine. Residues Ser-95 and Gln-99 each contribute to the FAD site. Asn-121 carries an N-linked (GlcNAc...) asparagine glycan. FAD contacts are provided by Asp-160, Thr-165, Ser-171, Ile-175, and Ile-226. 2 N-linked (GlcNAc...) asparagine glycosylation sites follow: Asn-280 and Asn-323. FAD-binding residues include Tyr-475, Ser-510, and Gln-513.

Belongs to the oxygen-dependent FAD-linked oxidoreductase family. In terms of assembly, monomer. FAD serves as cofactor.

It is found in the secreted. The protein localises to the extracellular space. The enzyme catalyses N(6)-dimethylallyladenine + A + H2O = 3-methyl-2-butenal + adenine + AH2. In terms of biological role, catalyzes the oxidation of cytokinins, a family of N(6)-substituted adenine derivatives that are plant hormones, where the substituent is an isopentenyl group. This chain is Cytokinin dehydrogenase 6 (CKX6), found in Oryza sativa subsp. japonica (Rice).